The sequence spans 655 residues: DNA-directed RNA polymerase III subunit rpc3 (655 aa).

Disordered regions lie at residues 153–183, 270–305, and 402–445; these read VKAN…SNEQ, KRKY…EENE, and RLDL…SSGG. Over residues 276 to 287 the composition is skewed to basic and acidic residues; sequence RRADEPNKKPRT. Over residues 291–305 the composition is skewed to acidic residues; the sequence is SVDEIDEQDEEEENE. The span at 405-417 shows a compositional bias: polar residues; sequence LSSSTGPMDTSQP. Over residues 418–427 the composition is skewed to basic and acidic residues; the sequence is DGRRGKRPLE. The leucine-zipper stretch occupies residues 582 to 603; the sequence is TYKAMSRCLQRLRFERSRIKDF.

This sequence belongs to the RNA polymerase beta chain family. Component of the RNA polymerase III (Pol III) complex consisting of 17 subunits.

The protein localises to the nucleus. Its function is as follows. DNA-dependent RNA polymerase catalyzes the transcription of DNA into RNA using the four ribonucleoside triphosphates as substrates. Specific core component of RNA polymerase III which synthesizes small RNAs, such as 5S rRNA and tRNAs. The polypeptide is DNA-directed RNA polymerase III subunit rpc3 (rpc82) (Neosartorya fischeri (strain ATCC 1020 / DSM 3700 / CBS 544.65 / FGSC A1164 / JCM 1740 / NRRL 181 / WB 181) (Aspergillus fischerianus)).